Consider the following 293-residue polypeptide: Ribosomal protein L11 methyltransferase (293 aa).

S-adenosyl-L-methionine contacts are provided by Thr-145, Gly-166, Asp-188, and Asn-230.

It belongs to the methyltransferase superfamily. PrmA family.

The protein resides in the cytoplasm. The catalysed reaction is L-lysyl-[protein] + 3 S-adenosyl-L-methionine = N(6),N(6),N(6)-trimethyl-L-lysyl-[protein] + 3 S-adenosyl-L-homocysteine + 3 H(+). Methylates ribosomal protein L11. This is Ribosomal protein L11 methyltransferase from Shewanella putrefaciens (strain CN-32 / ATCC BAA-453).